Here is a 264-residue protein sequence, read N- to C-terminus: Zinc finger protein CG30 (264 aa).

Residues 8–63 (CNICFSVAEIKNYFLQPIDRLTIIPVLELDTCKHQLCSMCIRKIRKRKKVPCPLCR) form an RING-type zinc finger.

The protein localises to the host nucleus. In terms of biological role, plays a role in the proper expression of late and very late genes. The sequence is that of Zinc finger protein CG30 (CG30) from Autographa californica nuclear polyhedrosis virus (AcMNPV).